The primary structure comprises 123 residues: Large ribosomal subunit protein uL18 (123 aa).

It belongs to the universal ribosomal protein uL18 family. In terms of assembly, part of the 50S ribosomal subunit; part of the 5S rRNA/L5/L18/L25 subcomplex. Contacts the 5S and 23S rRNAs.

This is one of the proteins that bind and probably mediate the attachment of the 5S RNA into the large ribosomal subunit, where it forms part of the central protuberance. This chain is Large ribosomal subunit protein uL18, found in Bifidobacterium adolescentis (strain ATCC 15703 / DSM 20083 / NCTC 11814 / E194a).